A 335-amino-acid polypeptide reads, in one-letter code: 2,4-dienoyl-CoA reductase [(3E)-enoyl-CoA-producing], mitochondrial (335 aa).

A mitochondrion-targeting transit peptide spans 1–34 (MALLGRAFFAGVSRLPCDPGPQRFFSFGTKTLYQ). 2 positions are modified to N6-acetyllysine; alternate: lysine 42 and lysine 49. N6-succinyllysine; alternate is present on residues lysine 42 and lysine 49. An NADP(+)-binding site is contributed by 66–71 (GGGTGL). Threonine 69 is modified (phosphothreonine). Lysine 73 is subject to N6-succinyllysine. An NADP(+)-binding site is contributed by arginine 91. Arginine 91 contacts substrate. Residues lysine 97 and lysine 106 each carry the N6-acetyllysine; alternate modification. An N6-succinyllysine; alternate mark is found at lysine 97 and lysine 106. Aspartate 117 is a binding site for NADP(+). Residues arginine 119 and phenylalanine 149 each contribute to the substrate site. The active-site Proton acceptor is the tyrosine 199. NADP(+) is bound by residues lysine 214 and 240–243 (PGPI). Position 244 is an N6-acetyllysine; alternate (lysine 244). N6-succinyllysine; alternate is present on lysine 244. Substrate is bound at residue arginine 251. Lysine 260 is subject to N6-acetyllysine; alternate. Lysine 260 is modified (N6-succinyllysine; alternate). The residue at position 315 (lysine 315) is an N6-acetyllysine. An N6-acetyllysine; alternate modification is found at lysine 319. An N6-succinyllysine; alternate modification is found at lysine 319.

Belongs to the short-chain dehydrogenases/reductases (SDR) family. 2,4-dienoyl-CoA reductase subfamily. In terms of assembly, homotetramer.

The protein resides in the mitochondrion. The enzyme catalyses a (2E,4E)-dienoyl-CoA + NADPH + H(+) = a 4,5-saturated-(3E)-enoyl-CoA + NADP(+). The catalysed reaction is a (2E,4Z)-dienoyl-CoA + NADPH + H(+) = a 4,5-saturated-(3E)-enoyl-CoA + NADP(+). It catalyses the reaction (2E,4E)-hexadienoyl-CoA + NADPH + H(+) = (3E)-hexenoyl-CoA + NADP(+). Its function is as follows. Auxiliary enzyme of beta-oxidation. It participates in the metabolism of unsaturated fatty enoyl-CoA esters having double bonds in both even- and odd-numbered positions in mitochondria. Catalyzes the NADP-dependent reduction of 2,4-dienoyl-CoA to yield trans-3-enoyl-CoA. The protein is 2,4-dienoyl-CoA reductase [(3E)-enoyl-CoA-producing], mitochondrial (Decr1) of Mus musculus (Mouse).